The following is a 115-amino-acid chain: UPF0102 protein SYO3AOP1_0546 (115 aa).

Belongs to the UPF0102 family.

The polypeptide is UPF0102 protein SYO3AOP1_0546 (Sulfurihydrogenibium sp. (strain YO3AOP1)).